Here is a 679-residue protein sequence, read N- to C-terminus: DNA-directed RNA polymerase subunit beta' (679 aa).

Residues C69, C71, C84, and C87 each contribute to the Zn(2+) site. Positions 486, 488, and 490 each coordinate Mg(2+).

The protein belongs to the RNA polymerase beta' chain family. RpoC1 subfamily. In terms of assembly, in plastids the minimal PEP RNA polymerase catalytic core is composed of four subunits: alpha, beta, beta', and beta''. When a (nuclear-encoded) sigma factor is associated with the core the holoenzyme is formed, which can initiate transcription. Mg(2+) serves as cofactor. The cofactor is Zn(2+).

Its subcellular location is the plastid. The protein resides in the chloroplast. It carries out the reaction RNA(n) + a ribonucleoside 5'-triphosphate = RNA(n+1) + diphosphate. Its function is as follows. DNA-dependent RNA polymerase catalyzes the transcription of DNA into RNA using the four ribonucleoside triphosphates as substrates. This is DNA-directed RNA polymerase subunit beta' from Physcomitrium patens (Spreading-leaved earth moss).